Here is a 764-residue protein sequence, read N- to C-terminus: Chloride anion exchanger (764 aa).

At 1-76 the chain is on the cytoplasmic side; it reads MIEPFGNQYI…YRLKEWLLSD (76 aa). The chain crosses the membrane as a helical span at residues 77–97; that stretch reads IVSGISTGIVAVLQGLAFALL. Over 98-99 the chain is Extracellular; sequence VD. The chain crosses the membrane as a helical span at residues 100 to 120; that stretch reads IPPVYGLYASFFPAIIYLFFG. At 121-124 the chain is on the cytoplasmic side; that stretch reads TSRH. Residues 125-145 traverse the membrane as a helical segment; the sequence is ISVGPFPILSMMVGLAVSGAV. Residues 146–175 lie on the Extracellular side of the membrane; sequence SKAVPDRNATTLGLPNNSNNSSLLDDERVR. N-linked (GlcNAc...) asparagine glycosylation is found at asparagine 153, asparagine 161, and asparagine 165. Residues 176-196 form a helical membrane-spanning segment; that stretch reads VAAAASVTVLSGIIQLAFGIL. Arginine 197 is a topological domain (cytoplasmic). Residues 198–218 traverse the membrane as a helical segment; the sequence is IGFVVIYLSESLISGFTTAAA. Over 219 to 257 the chain is Extracellular; that stretch reads VHVLVSQLKFIFQLTVPSHTDPVSIFKVLYSVFSQIEKT. A helical transmembrane segment spans residues 258-278; the sequence is NIADLVTALIVLLVVSIVKEI. Topologically, residues 279-342 are cytoplasmic; that stretch reads NQRFKDKLPV…VETFQNTVGD (64 aa). The chain crosses the membrane as a helical span at residues 343-363; the sequence is CFGIAMVAFAVAFSVASVYSL. The Extracellular segment spans residues 364-374; sequence KYDYPLDGNQE. Residues 375 to 395 traverse the membrane as a helical segment; the sequence is LIALGLGNIVCGVFRGFAGST. The Cytoplasmic portion of the chain corresponds to 396–411; sequence ALSRSAVQESTGGKTQ. Residues 412-432 traverse the membrane as a helical segment; it reads IAGLIGAIIVLIVVLAIGFLL. Residues 433 to 469 are Extracellular-facing; that stretch reads APLQKSVLAALALGNLKGMLMQFAEIGRLWRKDKYDC. Residues 470-490 form a helical membrane-spanning segment; it reads LIWIMTFIFTIVLGLGLGLAA. Residues 491-701 lie on the Cytoplasmic side of the membrane; the sequence is SVAFQLLTIV…EKLNRYEFFD (211 aa). The 196-residue stretch at 525 to 720 folds into the STAS domain; sequence DYYDMYEPEG…LTIHDAVLHI (196 aa). A PDZ-binding motif is present at residues 761–764; sequence ETKF.

The protein belongs to the SLC26A/SulP transporter (TC 2.A.53) family. Interacts with CFTR, SLC26A6 and NHERF1. Interacts with PDZK1. Interacts (via PDZ-binding motif) with NHERF4 (via the third PDZ domain); interaction leads to decreased expression of SLC26A3 on the cell membrane resulting in its reduced exchanger activity. N-glycosylation is required for efficient cell surface expression, and protection from proteolytic degradation. As to expression, expressed in the colon. Expression is significantly decreased in adenomas (polyps) and adenocarcinomas of the colon.

The protein localises to the apical cell membrane. It is found in the membrane. The protein resides in the cell membrane. It carries out the reaction hydrogencarbonate(in) + 2 chloride(out) = hydrogencarbonate(out) + 2 chloride(in). Inhibited by acidic pH. Functionally, mediates chloride-bicarbonate exchange with a chloride bicarbonate stoichiometry of 2:1 in the intestinal epithelia. Plays a role in the chloride and bicarbonate homeostasis during sperm epididymal maturation and capacitation. This Homo sapiens (Human) protein is Chloride anion exchanger (SLC26A3).